The following is a 307-amino-acid chain: Mycothiol acetyltransferase (307 aa).

N-acetyltransferase domains are found at residues 12–157 (TRTD…PPLP) and 160–307 (VTLR…YQLG). Residue E43 participates in 1D-myo-inositol 2-(L-cysteinylamino)-2-deoxy-alpha-D-glucopyranoside binding. 87–89 (LAV) serves as a coordination point for acetyl-CoA. 1D-myo-inositol 2-(L-cysteinylamino)-2-deoxy-alpha-D-glucopyranoside-binding residues include E187, K227, and E239. Residues 243-245 (LGV) and 250-256 (HGGGLGK) contribute to the acetyl-CoA site. Y278 serves as a coordination point for 1D-myo-inositol 2-(L-cysteinylamino)-2-deoxy-alpha-D-glucopyranoside.

Belongs to the acetyltransferase family. MshD subfamily. As to quaternary structure, monomer.

The catalysed reaction is 1D-myo-inositol 2-(L-cysteinylamino)-2-deoxy-alpha-D-glucopyranoside + acetyl-CoA = mycothiol + CoA + H(+). Catalyzes the transfer of acetyl from acetyl-CoA to desacetylmycothiol (Cys-GlcN-Ins) to form mycothiol. The sequence is that of Mycothiol acetyltransferase from Salinispora tropica (strain ATCC BAA-916 / DSM 44818 / JCM 13857 / NBRC 105044 / CNB-440).